A 257-amino-acid chain; its full sequence is Thiazole synthase (257 aa).

The active-site Schiff-base intermediate with DXP is the Lys-96. 1-deoxy-D-xylulose 5-phosphate is bound by residues Gly-157, 184-185 (AG), and 206-207 (NT).

The protein belongs to the ThiG family. Homotetramer. Forms heterodimers with either ThiH or ThiS.

The protein localises to the cytoplasm. The catalysed reaction is [ThiS sulfur-carrier protein]-C-terminal-Gly-aminoethanethioate + 2-iminoacetate + 1-deoxy-D-xylulose 5-phosphate = [ThiS sulfur-carrier protein]-C-terminal Gly-Gly + 2-[(2R,5Z)-2-carboxy-4-methylthiazol-5(2H)-ylidene]ethyl phosphate + 2 H2O + H(+). It participates in cofactor biosynthesis; thiamine diphosphate biosynthesis. Its function is as follows. Catalyzes the rearrangement of 1-deoxy-D-xylulose 5-phosphate (DXP) to produce the thiazole phosphate moiety of thiamine. Sulfur is provided by the thiocarboxylate moiety of the carrier protein ThiS. In vitro, sulfur can be provided by H(2)S. The polypeptide is Thiazole synthase (Bartonella quintana (strain Toulouse) (Rochalimaea quintana)).